The sequence spans 446 residues: N-succinylarginine dihydrolase (446 aa).

Substrate is bound by residues 19–28, Asn-110, and 137–138; these read AGLSFGNVAS and HR. The active site involves Glu-174. Residue Arg-213 participates in substrate binding. Residue His-249 is part of the active site. 2 residues coordinate substrate: Asp-251 and Asn-364. The Nucleophile role is filled by Cys-370.

This sequence belongs to the succinylarginine dihydrolase family. Homodimer.

The catalysed reaction is N(2)-succinyl-L-arginine + 2 H2O + 2 H(+) = N(2)-succinyl-L-ornithine + 2 NH4(+) + CO2. It participates in amino-acid degradation; L-arginine degradation via AST pathway; L-glutamate and succinate from L-arginine: step 2/5. Functionally, catalyzes the hydrolysis of N(2)-succinylarginine into N(2)-succinylornithine, ammonia and CO(2). The sequence is that of N-succinylarginine dihydrolase from Burkholderia multivorans (strain ATCC 17616 / 249).